The following is a 79-amino-acid chain: D-alanyl carrier protein (79 aa).

The Carrier domain occupies 1–77 (MDVKETILNI…KIISGVVELM (77 aa)). At S35 the chain carries O-(pantetheine 4'-phosphoryl)serine.

This sequence belongs to the DltC family. In terms of processing, 4'-phosphopantetheine is transferred from CoA to a specific serine of apo-DCP.

It is found in the cytoplasm. The protein operates within cell wall biogenesis; lipoteichoic acid biosynthesis. Its function is as follows. Carrier protein involved in the D-alanylation of lipoteichoic acid (LTA). The loading of thioester-linked D-alanine onto DltC is catalyzed by D-alanine--D-alanyl carrier protein ligase DltA. The DltC-carried D-alanyl group is further transferred to cell membrane phosphatidylglycerol (PG) by forming an ester bond, probably catalyzed by DltD. D-alanylation of LTA plays an important role in modulating the properties of the cell wall in Gram-positive bacteria, influencing the net charge of the cell wall. The sequence is that of D-alanyl carrier protein from Streptococcus suis (strain 98HAH33).